A 187-amino-acid chain; its full sequence is Elongation factor P (187 aa).

It belongs to the elongation factor P family.

It localises to the cytoplasm. It functions in the pathway protein biosynthesis; polypeptide chain elongation. Its function is as follows. Involved in peptide bond synthesis. Stimulates efficient translation and peptide-bond synthesis on native or reconstituted 70S ribosomes in vitro. Probably functions indirectly by altering the affinity of the ribosome for aminoacyl-tRNA, thus increasing their reactivity as acceptors for peptidyl transferase. The chain is Elongation factor P from Corynebacterium jeikeium (strain K411).